The following is a 428-amino-acid chain: Adenylosuccinate synthetase (428 aa).

GTP-binding positions include 12-18 (GDEGKGK) and 40-42 (GHT). Residue Asp-13 is the Proton acceptor of the active site. 2 residues coordinate Mg(2+): Asp-13 and Gly-40. Residues 13-16 (DEGK), 38-41 (NAGH), Thr-130, Arg-144, Gln-225, Thr-240, and Arg-304 contribute to the IMP site. Catalysis depends on His-41, which acts as the Proton donor. 300–306 (VTTGRAR) is a substrate binding site. GTP contacts are provided by residues Arg-306, 332 to 334 (KID), and 414 to 416 (SVG).

It belongs to the adenylosuccinate synthetase family. As to quaternary structure, homodimer. It depends on Mg(2+) as a cofactor.

It localises to the cytoplasm. It catalyses the reaction IMP + L-aspartate + GTP = N(6)-(1,2-dicarboxyethyl)-AMP + GDP + phosphate + 2 H(+). It participates in purine metabolism; AMP biosynthesis via de novo pathway; AMP from IMP: step 1/2. Functionally, plays an important role in the de novo pathway of purine nucleotide biosynthesis. Catalyzes the first committed step in the biosynthesis of AMP from IMP. This Clostridium botulinum (strain Loch Maree / Type A3) protein is Adenylosuccinate synthetase.